The primary structure comprises 830 residues: Interleukin-4 receptor subunit alpha (830 aa).

Positions 1–32 (MGWLCPGLTFSVSCLILVWAAGSGVTCVSPGG) are cleaved as a signal peptide. Residues 33–240 (VRVLEWPICL…NYYEEPLEQR (208 aa)) are Extracellular-facing. Cys-41 and Cys-51 are joined by a disulfide. 2 N-linked (GlcNAc...) asparagine glycosylation sites follow: Asn-60 and Asn-78. A disulfide bridge connects residues Cys-82 and Cys-94. Residues Asn-120, Asn-142, and Asn-170 are each glycosylated (N-linked (GlcNAc...) asparagine). Residues 133–232 (APRNLMVHAN…WSPSVKWLNY (100 aa)) form the Fibronectin type-III domain. Ser-172 is subject to Phosphoserine. N-linked (GlcNAc...) asparagine glycosylation is found at Asn-184 and Asn-217. Residues 220–224 (WSEWS) carry the WSXWS motif motif. Residues 241–264 (LPLGVSISCVVILIICLSCYFGII) form a helical membrane-spanning segment. Residues 265–830 (RIKKEWWDQI…SPGPACMDTS (566 aa)) lie on the Cytoplasmic side of the membrane. The Box 1 motif motif lies at 270–278 (WWDQIPNPA). Over residues 378-387 (ENEEEEEEED) the composition is skewed to acidic residues. Disordered regions lie at residues 378–403 (ENEEEEEEEDKGSFCPSPENSGGSFQ) and 450–488 (MPWAEFPRVGSPEASSQGKEQPLNPEPSPQATPTQSLAS). Positions 444-564 (ENASAPMPWA…ETWEQILRQS (121 aa)) are required for IRS1 activation and IL4-induced cell growth. Position 504 is a phosphotyrosine (Tyr-504). Disordered regions lie at residues 508 to 610 (STFL…EAGY) and 623 to 696 (CPGT…DGQK). A compositionally biased stretch (acidic residues) spans 518–534 (GELDSDPELAEALEEVE). A compositionally biased stretch (pro residues) spans 538–551 (PAAPQPSEPPPTLQ). A required for IL4-induced gene expression region spans residues 564-662 (SVLQRRAAPA…VPTPLFTFGL (99 aa)). Residues 570 to 582 (AAPAPASGPSSSG) show a composition bias toward low complexity. 2 positions are modified to phosphotyrosine: Tyr-583 and Tyr-610. Residues 623–635 (CPGTSGLEPSSGE) are compositionally biased toward polar residues. Residue Tyr-638 is modified to Phosphotyrosine. Pro residues-rich tracts occupy residues 646–655 (PGCPETPVPT) and 665–676 (EPPPSPQNPPFP). The ITIM motif motif lies at 716-721 (IVYSAL). A disordered region spans residues 811–830 (SQTPTAVAMLSPGPACMDTS).

The protein belongs to the type I cytokine receptor family. Type 4 subfamily. As to quaternary structure, the functional IL4 receptor is formed by initial binding of IL4 to IL4R. Subsequent recruitment to the complex of the common gamma chain, in immune cells, creates a type I receptor and, in non-immune cells, of IL13RA1 forms a type II receptor. IL4R can also interact with the IL13/IL13RA1 complex to form a similar type II receptor. Interacts with PIK3C3. Interacts with the SH2-containing phosphatases, PTPN6/SHIP1, PTPN11/SHIP2 and INPP5D/SHIP. Interacts with JAK1 through a Box 1-containing region; inhibited by SOCS5. Interacts with SOCS5; inhibits IL4 signaling. Interacts with JAK3. Interacts with CLM1. Interacts with IL13RA2. On IL4 binding, phosphorylated on C-terminal tyrosine residues.

It is found in the membrane. Functionally, receptor for both interleukin 4 and interleukin 13. Couples to the JAK1/2/3-STAT6 pathway. The IL4 response is involved in promoting Th2 differentiation. The IL4/IL13 responses are involved in regulating IgE production and, chemokine and mucus production at sites of allergic inflammation. In certain cell types, can signal through activation of insulin receptor substrates, IRS1/IRS2. The chain is Interleukin-4 receptor subunit alpha (IL4R) from Sus scrofa (Pig).